A 979-amino-acid chain; its full sequence is Receptor-type tyrosine-protein phosphatase-like N (979 aa).

The first 34 residues, 1–34, serve as a signal peptide directing secretion; that stretch reads MRLPGRPGGPGGSGGLRVLLCLLLLGSRPGGCNA. The tract at residues 35-131 is RESP18 homology domain; it reads ISAHGCLFDR…HPRDRSGLVP (97 aa). Residues 35–575 are Lumenal-facing; the sequence is ISAHGCLFDR…RPAHSTSPMR (541 aa). Residues Cys53 and Cys62 are joined by a disulfide bond. Residues 113–127 are compositionally biased toward basic and acidic residues; sequence IPRLRPPEPHPRDRS. Disordered stretches follow at residues 113 to 171, 248 to 272, 285 to 332, and 391 to 466; these read IPRL…GAGS, GSKG…PAQL, SQVP…EQPD, and EQVQ…STRP. 2 positions are modified to phosphoserine: Ser308 and Ser309. The span at 400–409 shows a compositional bias: pro residues; it reads EPPPPMPSLP. The sufficient for dimerization of proICA512 stretch occupies residues 449–575; sequence SPLGQNQPTM…RPAHSTSPMR (127 aa). Polar residues predominate over residues 451-466; that stretch reads LGQNQPTMAGQPSTRP. 2 N-linked (GlcNAc...) asparagine glycosylation sites follow: Asn506 and Asn524. The chain crosses the membrane as a helical span at residues 576–600; it reads SVLLTLVALAGVAGLLVALAVALCV. Residues 601-732 are sufficient for dimerization of proICA512; sequence RQHARQRDKE…PNTCATAQGE (132 aa). The Cytoplasmic portion of the chain corresponds to 601-979; that stretch reads RQHARQRDKE…VNAILKALPQ (379 aa). The tract at residues 643 to 680 is disordered; that stretch reads NRAEGPPEPSRVSSVSSQFSDAAQASPSSHSSTPSWCE. A compositionally biased stretch (low complexity) spans 652–677; the sequence is SRVSSVSSQFSDAAQASPSSHSSTPS. Residues 709–969 enclose the Tyrosine-protein phosphatase domain; it reads LAKEWQALCA…EFALTAVAEE (261 aa). Residue Lys754 forms a Glycyl lysine isopeptide (Lys-Gly) (interchain with G-Cter in SUMO) linkage.

This sequence belongs to the protein-tyrosine phosphatase family. Receptor class 8 subfamily. As to quaternary structure, homodimer; shown for the unprocessed protein (proICA512) in the endoplasmic reticulum and resolved during protein maturation as ICA512-TMF seems to be predominantly monomeric in secretory granules; however, ICA512-CCF interacts with ICA512-TMF disrupting the ICA512-TMF:SNTB2 complex. The isolated lumenal RESP18 homology domain has been shown to form disulfide-linked homooligomers. Interacts (via cytoplasmic domain) with phosphorylated SNTB2; this protects PTPRN against cleavage by CAPN1 to produce ICA512-CCF. Dephosphorylation of SNTB2 upon insulin stimulation disrupts the interaction and results in PTPRN cleavage. Interacts with SNX19. ICA512-CCF interacts with PIAS4; in the nucleus. Interacts with STAT5B (phosphorylated); down-regulated by ICA512-CCF sumoylation; ICA512-CCF prevents STAT5B dephosphorylation; ICA512-CCF mediates interaction of STAT5B with PIAS4. Interacts (via RESP18 homology domain) with insulin and proinsulin. Interacts with PTPRN2, PTPRA and PTPRE. In terms of processing, N-glycosylated. O-glycosylated. Post-translationally, subject to proteolytic cleavage at multiple sites. Subject to cleavage on a pair of basic residues. On exocytosis of secretory granules in pancreatic beta-cells ICA512-TMF is transiently inserted in the plasma-membrane and cleaved by mu-type calpain CPN1 to yield ICA512-CCF. In terms of processing, sumoylated at two sites including Lys-754. Sumoylation decreases interaction with STAT5. In terms of tissue distribution, detected in pituitary (at protein level).

The protein localises to the membrane. The protein resides in the cytoplasmic vesicle. It localises to the secretory vesicle membrane. Its subcellular location is the perikaryon. It is found in the cell projection. The protein localises to the axon. The protein resides in the synapse. It localises to the cell membrane. Its subcellular location is the endosome. It is found in the nucleus. In terms of biological role, plays a role in vesicle-mediated secretory processes. Required for normal accumulation of secretory vesicles in hippocampus, pituitary and pancreatic islets. Required for the accumulation of normal levels of insulin-containing vesicles and preventing their degradation. Plays a role in insulin secretion in response to glucose stimuli. Required for normal accumulation of the neurotransmitters norepinephrine, dopamine and serotonin in the brain. In females, but not in males, required for normal accumulation and secretion of pituitary hormones, such as luteinizing hormone (LH) and follicle-stimulating hormone (FSH). Required to maintain normal levels of renin expression and renin release. Seems to lack intrinsic enzyme activity. May regulate catalytic active protein-tyrosine phosphatases such as PTPRA through dimerization. ICA512-TMF regulates dynamics and exocytosis of insulin secretory granules (SGs); binding of ICA512-TMF to SNTB2/beta-2-syntrophin is proposed to restrain SGs mobility and exocytosis by tethering them to the actin cytoskeleton depending on UTRN; the function is inhibited by cytoplasmic ICA512-CFF dimerizing with ICA512-TMF and displacing SNTB2. Functionally, ICA512-CCF translocated to the nucleus promotes expression of insulin and other granule-related genes; the function implicates binding to and regulating activity of STAT5B probably by preventing its dephosphorylation and potentially by inducing its sumoylation by recruiting PIAS4. Enhances pancreatic beta-cell proliferation by converging with signaling by STAT5B and STAT3. ICA512-CCF located in the cytoplasm regulates dynamics and exocytosis of insulin secretory granules (SGs) by dimerizing with ICA512-TMF and displacing SNTB2 thus enhancing SGs mobility and exocytosis. The protein is Receptor-type tyrosine-protein phosphatase-like N (PTPRN) of Bos taurus (Bovine).